A 338-amino-acid polypeptide reads, in one-letter code: Anthranilate phosphoribosyltransferase (338 aa).

Residues G83, 86 to 87, S91, 93 to 96, 111 to 119, and A123 contribute to the 5-phospho-alpha-D-ribose 1-diphosphate site; these read GD, NCST, and KHGNRAVSS. G83 contacts anthranilate. S95 contributes to the Mg(2+) binding site. An anthranilate-binding site is contributed by N114. R169 contacts anthranilate. D228 and E229 together coordinate Mg(2+).

This sequence belongs to the anthranilate phosphoribosyltransferase family. As to quaternary structure, homodimer. Mg(2+) is required as a cofactor.

The catalysed reaction is N-(5-phospho-beta-D-ribosyl)anthranilate + diphosphate = 5-phospho-alpha-D-ribose 1-diphosphate + anthranilate. Its pathway is amino-acid biosynthesis; L-tryptophan biosynthesis; L-tryptophan from chorismate: step 2/5. Catalyzes the transfer of the phosphoribosyl group of 5-phosphorylribose-1-pyrophosphate (PRPP) to anthranilate to yield N-(5'-phosphoribosyl)-anthranilate (PRA). The chain is Anthranilate phosphoribosyltransferase from Nitratidesulfovibrio vulgaris (strain DSM 19637 / Miyazaki F) (Desulfovibrio vulgaris).